Consider the following 149-residue polypeptide: UPF0178 protein Lmo1456 (149 aa).

It belongs to the UPF0178 family.

The sequence is that of UPF0178 protein Lmo1456 from Listeria monocytogenes serovar 1/2a (strain ATCC BAA-679 / EGD-e).